A 478-amino-acid polypeptide reads, in one-letter code: UDP-N-acetylmuramate--L-alanine ligase (478 aa).

Residue glycine 112–threonine 118 coordinates ATP.

This sequence belongs to the MurCDEF family.

The protein localises to the cytoplasm. The enzyme catalyses UDP-N-acetyl-alpha-D-muramate + L-alanine + ATP = UDP-N-acetyl-alpha-D-muramoyl-L-alanine + ADP + phosphate + H(+). Its pathway is cell wall biogenesis; peptidoglycan biosynthesis. Its function is as follows. Cell wall formation. This Polynucleobacter asymbioticus (strain DSM 18221 / CIP 109841 / QLW-P1DMWA-1) (Polynucleobacter necessarius subsp. asymbioticus) protein is UDP-N-acetylmuramate--L-alanine ligase.